An 83-amino-acid chain; its full sequence is Small ribosomal subunit protein uS17 (83 aa).

Belongs to the universal ribosomal protein uS17 family. Part of the 30S ribosomal subunit.

One of the primary rRNA binding proteins, it binds specifically to the 5'-end of 16S ribosomal RNA. The sequence is that of Small ribosomal subunit protein uS17 from Nitratiruptor sp. (strain SB155-2).